The sequence spans 387 residues: MDRVGVLLLNLGGPEQLEDVRPFLFNLFSDPEIIRLPFPWLQKPLAWLISSLRSEKSQENYKQIGGGSPLRKITEAQAEALEQRLAEIGHTAQIYIGMRYWHPFTEEAIARIKRDRLKNLVILPLYPQFSISTSGSSFRVLEEMWNADPQLKAINYTLIPSWYDDPRYLAAMADLIAQELDKCEEPNRVHIFFSAHGVPQSYVDEAGDPYQAEIEACTRLIMQTLNRPNDYTLAYQSRVGPVEWLKPYTEDALKELGEQGVQDLLVVPISFVSEHIETLQEIDIEYREVAEEAGIENFYRVPALNTHPVFIDSLAQLVTKSLQEPPCTFNQVIHPKENMKMYPQERWQWGLTTAAEVWNGRLAMVGFIALLIELISGHGPLHFVGLL.

Fe cation is bound by residues H196 and E277.

Belongs to the ferrochelatase family.

The protein localises to the cytoplasm. It carries out the reaction heme b + 2 H(+) = protoporphyrin IX + Fe(2+). It participates in porphyrin-containing compound metabolism; protoheme biosynthesis; protoheme from protoporphyrin-IX: step 1/1. Its function is as follows. Catalyzes the ferrous insertion into protoporphyrin IX. This is Ferrochelatase from Rippkaea orientalis (strain PCC 8801 / RF-1) (Cyanothece sp. (strain PCC 8801)).